The following is a 50-amino-acid chain: Light-harvesting protein B-880 alpha chain (50 aa).

The Cytoplasmic segment spans residues 1 to 12 (MYKLWLLFDPRR). The chain crosses the membrane as a helical span at residues 13–33 (ALVALSAFLFVLALIIHFIAL). His-29 is a binding site for a bacteriochlorophyll. At 34–50 (STDRFNWLEGKPAVKAA) the chain is on the periplasmic side.

It belongs to the antenna complex alpha subunit family. In terms of assembly, the core complex is formed by different alpha and beta chains, binding bacteriochlorophyll molecules, and arranged most probably in tetrameric structures disposed around the reaction center. The non-pigmented gamma chains may constitute additional components.

It is found in the cell inner membrane. In terms of biological role, antenna complexes are light-harvesting systems, which transfer the excitation energy to the reaction centers. The sequence is that of Light-harvesting protein B-880 alpha chain from Rhodoblastus acidophilus (Rhodopseudomonas acidophila).